We begin with the raw amino-acid sequence, 345 residues long: uncharacterized protein (345 aa).

3 Solcar repeats span residues Met-80–Arg-153, Ser-162–Lys-246, and Asn-256–Phe-339. The next 6 membrane-spanning stretches (helical) occupy residues Phe-83–Ile-103, Gly-128–Glu-148, Ala-220–Trp-240, Ala-262–Val-282, Val-296–Val-316, and Val-319–Phe-339.

The protein belongs to the mitochondrial carrier (TC 2.A.29) family.

The protein localises to the mitochondrion inner membrane. This is an uncharacterized protein from Schizosaccharomyces pombe (strain 972 / ATCC 24843) (Fission yeast).